Reading from the N-terminus, the 119-residue chain is Ribosome-binding factor A (119 aa).

This sequence belongs to the RbfA family. As to quaternary structure, monomer. Binds 30S ribosomal subunits, but not 50S ribosomal subunits or 70S ribosomes.

Its subcellular location is the cytoplasm. One of several proteins that assist in the late maturation steps of the functional core of the 30S ribosomal subunit. Associates with free 30S ribosomal subunits (but not with 30S subunits that are part of 70S ribosomes or polysomes). Required for efficient processing of 16S rRNA. May interact with the 5'-terminal helix region of 16S rRNA. In Chlorobium phaeovibrioides (strain DSM 265 / 1930) (Prosthecochloris vibrioformis (strain DSM 265)), this protein is Ribosome-binding factor A.